Reading from the N-terminus, the 458-residue chain is tRNA modification GTPase MnmE (458 aa).

Residues R26, E88, and R127 each coordinate (6S)-5-formyl-5,6,7,8-tetrahydrofolate. One can recognise a TrmE-type G domain in the interval 224 to 378; that stretch reads GLSTAIIGRP…IEDRINQLFF (155 aa). Residue N234 coordinates K(+). GTP contacts are provided by residues 234–239, 253–259, and 278–281; these read NVGKSS, TDIAGTT, and DTAG. S238 provides a ligand contact to Mg(2+). Positions 253, 255, and 258 each coordinate K(+). T259 is a binding site for Mg(2+). K458 contacts (6S)-5-formyl-5,6,7,8-tetrahydrofolate.

It belongs to the TRAFAC class TrmE-Era-EngA-EngB-Septin-like GTPase superfamily. TrmE GTPase family. As to quaternary structure, homodimer. Heterotetramer of two MnmE and two MnmG subunits. Requires K(+) as cofactor.

The protein resides in the cytoplasm. Functionally, exhibits a very high intrinsic GTPase hydrolysis rate. Involved in the addition of a carboxymethylaminomethyl (cmnm) group at the wobble position (U34) of certain tRNAs, forming tRNA-cmnm(5)s(2)U34. The protein is tRNA modification GTPase MnmE of Streptococcus pyogenes serotype M5 (strain Manfredo).